The chain runs to 378 residues: tRNA (guanine(26)-N(2))-dimethyltransferase (378 aa).

A Trm1 methyltransferase domain is found at 4-374 (KEVTEGKVRI…KGYEEIIRCV (371 aa)). Residues arginine 44, arginine 69, aspartate 87, aspartate 114, and alanine 115 each coordinate S-adenosyl-L-methionine. Residues cysteine 246, cysteine 249, cysteine 263, and cysteine 266 each coordinate Zn(2+).

It belongs to the class I-like SAM-binding methyltransferase superfamily. Trm1 family.

It carries out the reaction guanosine(26) in tRNA + 2 S-adenosyl-L-methionine = N(2)-dimethylguanosine(26) in tRNA + 2 S-adenosyl-L-homocysteine + 2 H(+). Dimethylates a single guanine residue at position 26 of a number of tRNAs using S-adenosyl-L-methionine as donor of the methyl groups. This Saccharolobus islandicus (strain L.S.2.15 / Lassen #1) (Sulfolobus islandicus) protein is tRNA (guanine(26)-N(2))-dimethyltransferase.